The primary structure comprises 77 residues: Beta-defensin 135 (77 aa).

The signal sequence occupies residues 1–24 (MATRSVLLALVVLNLLFYVPPGRS). Intrachain disulfides connect Cys-37–Cys-64, Cys-44–Cys-58, and Cys-48–Cys-65.

Belongs to the beta-defensin family.

The protein resides in the secreted. In terms of biological role, has antibacterial activity. This Homo sapiens (Human) protein is Beta-defensin 135 (DEFB135).